The primary structure comprises 201 residues: Peptidyl-tRNA hydrolase (201 aa).

A tRNA-binding site is contributed by Y17. H22 serves as the catalytic Proton acceptor. Residues Y68, N70, and N116 each coordinate tRNA.

Belongs to the PTH family. As to quaternary structure, monomer.

It localises to the cytoplasm. It catalyses the reaction an N-acyl-L-alpha-aminoacyl-tRNA + H2O = an N-acyl-L-amino acid + a tRNA + H(+). Hydrolyzes ribosome-free peptidyl-tRNAs (with 1 or more amino acids incorporated), which drop off the ribosome during protein synthesis, or as a result of ribosome stalling. Functionally, catalyzes the release of premature peptidyl moieties from peptidyl-tRNA molecules trapped in stalled 50S ribosomal subunits, and thus maintains levels of free tRNAs and 50S ribosomes. The sequence is that of Peptidyl-tRNA hydrolase from Lawsonia intracellularis (strain PHE/MN1-00).